The chain runs to 340 residues: Ubiquitin-like domain-containing CTD phosphatase (340 aa).

The region spanning 24 to 101 (LTLTVKWNGK…MTMIGTVEDD (78 aa)) is the Ubiquitin-like domain. An FCP1 homology domain is found at 151-312 (CRQGKKLLVL…VKLTQYLLTI (162 aa)). The phosphatase stretch occupies residues 151 to 312 (CRQGKKLLVL…VKLTQYLLTI (162 aa)). Mg(2+) is bound by residues aspartate 161, aspartate 163, and aspartate 271.

Mg(2+) is required as a cofactor.

The protein localises to the nucleus. The enzyme catalyses O-phospho-L-seryl-[protein] + H2O = L-seryl-[protein] + phosphate. It carries out the reaction O-phospho-L-threonyl-[protein] + H2O = L-threonyl-[protein] + phosphate. Its function is as follows. Dephosphorylates 26S nuclear proteasomes, thereby decreasing their proteolytic activity. The dephosphorylation may prevent assembly of the core and regulatory particles (CP and RP) into mature 26S proteasome. The sequence is that of Ubiquitin-like domain-containing CTD phosphatase from Arabidopsis thaliana (Mouse-ear cress).